Reading from the N-terminus, the 464-residue chain is MMARRDPKSWAKRLVRAQTLQKQRRAPVGPSAPPPDEEDPRLKCKNCGAFGHTARSTRCPMKCWKAALVPATLGKKEGKENLKPWKPRGEANPGPLNKDKGEKEERPRQQDPQRKALLHMFSGKPPEKPLPNGKGSTESSDHLRVASGPMPVHTTSKRPRVDPVLADRSAAEMSGRGSVLASLSPLRKASLSSSSSLGPKERQTGAAADIPQPAVRHQGREPLLVVKPTHSRPEGGCREVPQAASKTHGLLQAARPQAQDKRPAVTSQPCPPAATHSLGLGSNLSFGPGAKRPAQAPIQACLNFPKKPRLGPFQIPESAIQGGELGAPENLQPPPAATELGPSTSPQMGRRTPAQVPSIDRQPPHSTPCLPTAQACTMSHHSAASHDGAQPLRVLFRRLENGRWSSSLLAAPSFHSPEKPGAFLAQSPHVSEKSEAPCVRVPPSVLYEDLQVSSSSEDSDSDLE.

Disordered stretches follow at residues 1–42 (MMAR…DPRL), 69–389 (VPAT…HDGA), and 415–437 (HSPE…SEAP). Basic and acidic residues-rich tracts occupy residues 74 to 89 (GKKE…KPRG) and 97 to 114 (NKDK…DPQR). The segment covering 180-197 (LASLSPLRKASLSSSSSL) has biased composition (low complexity).

Belongs to the FAM90 family.

The chain is Protein FAM90A8 (FAM90A8) from Homo sapiens (Human).